Consider the following 297-residue polypeptide: tRNA dimethylallyltransferase (297 aa).

Residue 9-16 (GPTASGKS) coordinates ATP. 11-16 (TASGKS) is a substrate binding site. Interaction with substrate tRNA stretches follow at residues 34 to 37 (DSMQ) and 155 to 159 (QRVIR).

Belongs to the IPP transferase family. As to quaternary structure, monomer. Mg(2+) is required as a cofactor.

It catalyses the reaction adenosine(37) in tRNA + dimethylallyl diphosphate = N(6)-dimethylallyladenosine(37) in tRNA + diphosphate. Its function is as follows. Catalyzes the transfer of a dimethylallyl group onto the adenine at position 37 in tRNAs that read codons beginning with uridine, leading to the formation of N6-(dimethylallyl)adenosine (i(6)A). The sequence is that of tRNA dimethylallyltransferase from Leuconostoc mesenteroides subsp. mesenteroides (strain ATCC 8293 / DSM 20343 / BCRC 11652 / CCM 1803 / JCM 6124 / NCDO 523 / NBRC 100496 / NCIMB 8023 / NCTC 12954 / NRRL B-1118 / 37Y).